Reading from the N-terminus, the 474-residue chain is Trifunctional enzyme subunit beta, mitochondrial (474 aa).

The transit peptide at 1–33 (MTILTYPFKNLPTASKWALRFSIRPLSCSSQLR) directs the protein to the mitochondrion. K72 is modified (N6-acetyllysine; alternate). At K72 the chain carries N6-succinyllysine; alternate. The Acyl-thioester intermediate role is filled by C138. The stretch at 173 to 220 (IRHSRKMRKLMLDLNKAKSMGQRLSLISKFRFNFLAPELPAVSEFSTS) is an intramembrane region. K188 is subject to N6-acetyllysine; alternate. At K188 the chain carries N6-succinyllysine; alternate. N6-succinyllysine occurs at positions 190, 272, and 291. K293 is modified (N6-acetyllysine; alternate). Residue K293 is modified to N6-succinyllysine; alternate. An N6-acetyllysine modification is found at K298. Residue K332 is modified to N6-acetyllysine; alternate. N6-succinyllysine; alternate is present on K332. Residues K348 and K361 each carry the N6-acetyllysine modification. The active-site Proton donor/acceptor is C458.

Belongs to the thiolase-like superfamily. Thiolase family. As to quaternary structure, heterotetramer of 2 alpha/HADHA and 2 beta/HADHB subunits; forms the mitochondrial trifunctional enzyme. Also purified as higher order heterooligomers including a 4 alpha/HADHA and 4 beta/HADHB heterooligomer which physiological significance remains unclear. The mitochondrial trifunctional enzyme interacts with MTLN. Interacts with RSAD2/viperin.

The protein resides in the mitochondrion. Its subcellular location is the mitochondrion inner membrane. It is found in the mitochondrion outer membrane. It localises to the endoplasmic reticulum. The enzyme catalyses an acyl-CoA + acetyl-CoA = a 3-oxoacyl-CoA + CoA. It carries out the reaction butanoyl-CoA + acetyl-CoA = 3-oxohexanoyl-CoA + CoA. It catalyses the reaction hexanoyl-CoA + acetyl-CoA = 3-oxooctanoyl-CoA + CoA. The catalysed reaction is octanoyl-CoA + acetyl-CoA = 3-oxodecanoyl-CoA + CoA. The enzyme catalyses decanoyl-CoA + acetyl-CoA = 3-oxododecanoyl-CoA + CoA. It carries out the reaction dodecanoyl-CoA + acetyl-CoA = 3-oxotetradecanoyl-CoA + CoA. It catalyses the reaction tetradecanoyl-CoA + acetyl-CoA = 3-oxohexadecanoyl-CoA + CoA. Its pathway is lipid metabolism; fatty acid beta-oxidation. In terms of biological role, mitochondrial trifunctional enzyme catalyzes the last three of the four reactions of the mitochondrial beta-oxidation pathway. The mitochondrial beta-oxidation pathway is the major energy-producing process in tissues and is performed through four consecutive reactions breaking down fatty acids into acetyl-CoA. Among the enzymes involved in this pathway, the trifunctional enzyme exhibits specificity for long-chain fatty acids. Mitochondrial trifunctional enzyme is a heterotetrameric complex composed of two proteins, the trifunctional enzyme subunit alpha/HADHA carries the 2,3-enoyl-CoA hydratase and the 3-hydroxyacyl-CoA dehydrogenase activities, while the trifunctional enzyme subunit beta/HADHB described here bears the 3-ketoacyl-CoA thiolase activity. This is Trifunctional enzyme subunit beta, mitochondrial (HADHB) from Homo sapiens (Human).